The chain runs to 147 residues: Acidic phospholipase A2 beta-bungarotoxin A4 chain (147 aa).

The N-terminal stretch at 1–19 (MNPAHLLVLSAVCVSLLGA) is a signal peptide. Residues 20 to 27 (ANIPPQHL) constitute a propeptide that is removed on maturation. 6 disulfide bridges follow: Cys54–Cys146, Cys56–Cys72, Cys71–Cys127, Cys78–Cys120, Cys88–Cys113, and Cys106–Cys118. The Ca(2+) site is built by Tyr55, Gly57, and Gly59. His75 is an active-site residue. Asp76 provides a ligand contact to Ca(2+). Asp121 is a catalytic residue.

Belongs to the phospholipase A2 family. Group I subfamily. D49 sub-subfamily. As to quaternary structure, heterodimer; disulfide-linked. The A chains have phospholipase A2 activity and the B chains show homology with the basic protease inhibitors. Ca(2+) serves as cofactor. As to expression, expressed by the venom gland.

Its subcellular location is the secreted. It catalyses the reaction a 1,2-diacyl-sn-glycero-3-phosphocholine + H2O = a 1-acyl-sn-glycero-3-phosphocholine + a fatty acid + H(+). Functionally, snake venom phospholipase A2 (PLA2) that inhibits neuromuscular transmission by blocking acetylcholine release from the nerve termini. PLA2 catalyzes the calcium-dependent hydrolysis of the 2-acyl groups in 3-sn-phosphoglycerides. The polypeptide is Acidic phospholipase A2 beta-bungarotoxin A4 chain (Bungarus multicinctus (Many-banded krait)).